The chain runs to 213 residues: Ribosomal RNA small subunit methyltransferase G (213 aa).

S-adenosyl-L-methionine is bound by residues G55, 105–106, and R124; that span reads AE.

Belongs to the methyltransferase superfamily. RNA methyltransferase RsmG family.

It localises to the cytoplasm. In terms of biological role, specifically methylates the N7 position of a guanine in 16S rRNA. This chain is Ribosomal RNA small subunit methyltransferase G, found in Fervidobacterium nodosum (strain ATCC 35602 / DSM 5306 / Rt17-B1).